The primary structure comprises 448 residues: Phosphoglucosamine mutase (448 aa).

Ser100 (phosphoserine intermediate) is an active-site residue. Positions 100, 240, 242, and 244 each coordinate Mg(2+). Ser100 is modified (phosphoserine).

This sequence belongs to the phosphohexose mutase family. Mg(2+) serves as cofactor. In terms of processing, activated by phosphorylation.

The enzyme catalyses alpha-D-glucosamine 1-phosphate = D-glucosamine 6-phosphate. Its function is as follows. Catalyzes the conversion of glucosamine-6-phosphate to glucosamine-1-phosphate. The sequence is that of Phosphoglucosamine mutase from Bacillus cereus (strain B4264).